A 67-amino-acid polypeptide reads, in one-letter code: Large ribosomal subunit protein bL35 (67 aa).

It belongs to the bacterial ribosomal protein bL35 family.

In Synechocystis sp. (strain ATCC 27184 / PCC 6803 / Kazusa), this protein is Large ribosomal subunit protein bL35.